We begin with the raw amino-acid sequence, 612 residues long: MACPF domain-containing protein NSL1 (612 aa).

In terms of domain architecture, MACPF spans 5–338 (NFTRLDAHSA…PPIEELHQFL (334 aa)).

This sequence belongs to the complement C6/C7/C8/C9 (TC 1.C.39) family.

In terms of biological role, negatively controls the salicylic acid (SA)-mediated pathway of programmed cell death in plant immunity. The protein is MACPF domain-containing protein NSL1 (NSL1) of Arabidopsis thaliana (Mouse-ear cress).